A 246-amino-acid chain; its full sequence is Type III pantothenate kinase (246 aa).

An ATP-binding site is contributed by 6-13 (DVGNTHSV). 103–106 (GADR) contacts substrate. Catalysis depends on Asp-105, which acts as the Proton acceptor. Asp-125 contacts K(+). Thr-128 provides a ligand contact to ATP. Position 179 (Thr-179) interacts with substrate.

The protein belongs to the type III pantothenate kinase family. As to quaternary structure, homodimer. The cofactor is NH4(+). It depends on K(+) as a cofactor.

The protein localises to the cytoplasm. The enzyme catalyses (R)-pantothenate + ATP = (R)-4'-phosphopantothenate + ADP + H(+). It participates in cofactor biosynthesis; coenzyme A biosynthesis; CoA from (R)-pantothenate: step 1/5. Functionally, catalyzes the phosphorylation of pantothenate (Pan), the first step in CoA biosynthesis. This is Type III pantothenate kinase from Thermotoga sp. (strain RQ2).